A 460-amino-acid polypeptide reads, in one-letter code: Probable argininosuccinate lyase (460 aa).

Residues S26, N114, and T159 each contribute to the 2-(N(omega)-L-arginino)succinate site. The Proton acceptor role is filled by H160. S281 serves as the catalytic Proton donor. Residues N289, Y321, Q326, and K329 each contribute to the 2-(N(omega)-L-arginino)succinate site.

This sequence belongs to the lyase 1 family. Argininosuccinate lyase subfamily. As to quaternary structure, homotetramer.

It carries out the reaction 2-(N(omega)-L-arginino)succinate = fumarate + L-arginine. Its pathway is amino-acid biosynthesis; L-arginine biosynthesis; L-arginine from L-ornithine and carbamoyl phosphate: step 3/3. The protein is Probable argininosuccinate lyase (argx) of Schizosaccharomyces pombe (strain 972 / ATCC 24843) (Fission yeast).